The chain runs to 98 residues: Putative pterin-4-alpha-carbinolamine dehydratase (98 aa).

The protein belongs to the pterin-4-alpha-carbinolamine dehydratase family.

It catalyses the reaction (4aS,6R)-4a-hydroxy-L-erythro-5,6,7,8-tetrahydrobiopterin = (6R)-L-erythro-6,7-dihydrobiopterin + H2O. The chain is Putative pterin-4-alpha-carbinolamine dehydratase from Roseobacter denitrificans (strain ATCC 33942 / OCh 114) (Erythrobacter sp. (strain OCh 114)).